Reading from the N-terminus, the 670-residue chain is MGEPEKRAGTHGIRCFAKIKVFLLALTWAYASKALSATYMNSMLTQIERRFNISTSIVGLINGSFEVGNLLLIIFVSYFGRKRHRPIMIGIGCAVMGLGCFIISLPHFLMGRYEYETTISPTSNLSSNSFLCMENRTQTLKPTQDPAECVKEMKSLMWIYVLVGNIIRGIGETPIMPLGISYIEDFAKSENSPFYIGILEVGKITGPIAAIWLGSFCATIYVDMGSVNTDDLTITPTDTRCVGAWWIGFLVCAGLNILISIPFFFFPKTFPKEGPEDMANETKNDEGDKHREKAKEEKRGITKDFFLFMKSLSCNPIYMLCVLTSVLQVNGFVSIFTFKPKYLEHHYGKSSSEAIFLMGLYTLPSVCVGYLISGFIMKKFKITLKKAAFISYCLGMSECLLSLCNFMLTCDNVPIAGLTTSYEGIQQSFDMENTVLADCNTRCSCLTKTWDPVCGDNGLAYITPCLAGCEKSVGSGINMVLQDCSCIQSSGNSSAVLGLCNKGPDCANKLQYFLIITVFCSFFYSLSLIPGYMIFLRCMKSEEKSLGIGLQAFCMRILGGILAPIYFGVLIDRTCLHWGTQKCGEPGACRTYEINSFRSIYLGLPAALRGSSYLPAFFILRLMRKFQFPGDINSPVTDHVEMMLTEKESEHTDVHRSPQVENDGELKTKL.

At 1–20 (MGEPEKRAGTHGIRCFAKIK) the chain is on the cytoplasmic side. Residues 21-40 (VFLLALTWAYASKALSATYM) traverse the membrane as a helical segment. At 41-59 (NSMLTQIERRFNISTSIVG) the chain is on the extracellular side. Residue Asn-52 is glycosylated (N-linked (GlcNAc...) asparagine). A helical transmembrane segment spans residues 60-80 (LINGSFEVGNLLLIIFVSYFG). Topologically, residues 81–86 (RKRHRP) are cytoplasmic. A helical transmembrane segment spans residues 87-111 (IMIGIGCAVMGLGCFIISLPHFLMG). Residues 112-155 (RYEYETTISPTSNLSSNSFLCMENRTQTLKPTQDPAECVKEMKS) are Extracellular-facing. 2 N-linked (GlcNAc...) asparagine glycosylation sites follow: Asn-124 and Asn-135. A helical transmembrane segment spans residues 156-184 (LMWIYVLVGNIIRGIGETPIMPLGISYIE). Topologically, residues 185 to 203 (DFAKSENSPFYIGILEVGK) are cytoplasmic. A helical transmembrane segment spans residues 204–224 (ITGPIAAIWLGSFCATIYVDM). Residues 225–242 (GSVNTDDLTITPTDTRCV) are Extracellular-facing. A helical transmembrane segment spans residues 243–267 (GAWWIGFLVCAGLNILISIPFFFFP). Residues 268–311 (KTFPKEGPEDMANETKNDEGDKHREKAKEEKRGITKDFFLFMKS) lie on the Cytoplasmic side of the membrane. Residues 276-295 (EDMANETKNDEGDKHREKAK) form a disordered region. A helical transmembrane segment spans residues 312 to 333 (LSCNPIYMLCVLTSVLQVNGFV). Topologically, residues 334 to 353 (SIFTFKPKYLEHHYGKSSSE) are extracellular. A helical transmembrane segment spans residues 354-377 (AIFLMGLYTLPSVCVGYLISGFIM). Residues 378–381 (KKFK) are Cytoplasmic-facing. The chain crosses the membrane as a helical span at residues 382-405 (ITLKKAAFISYCLGMSECLLSLCN). Residues 406–513 (FMLTCDNVPI…PDCANKLQYF (108 aa)) lie on the Extracellular side of the membrane. A Kazal-like domain is found at 433-488 (NTVLADCNTRCSCLTKTWDPVCGDNGLAYITPCLAGCEKSVGSGINMVLQDCSCIQ). 3 disulfide bridges follow: Cys-439–Cys-469, Cys-445–Cys-465, and Cys-454–Cys-486. N-linked (GlcNAc...) asparagine glycosylation occurs at Asn-492. The chain crosses the membrane as a helical span at residues 514–536 (LIITVFCSFFYSLSLIPGYMIFL). Residues 537–545 (RCMKSEEKS) lie on the Cytoplasmic side of the membrane. A helical transmembrane segment spans residues 546–571 (LGIGLQAFCMRILGGILAPIYFGVLI). The Extracellular portion of the chain corresponds to 572 to 605 (DRTCLHWGTQKCGEPGACRTYEINSFRSIYLGLP). Residues 606–623 (AALRGSSYLPAFFILRLM) traverse the membrane as a helical segment. At 624–670 (RKFQFPGDINSPVTDHVEMMLTEKESEHTDVHRSPQVENDGELKTKL) the chain is on the cytoplasmic side. Phosphoserine is present on Ser-634. The disordered stretch occupies residues 647 to 670 (KESEHTDVHRSPQVENDGELKTKL).

It belongs to the organo anion transporter (TC 2.A.60) family.

The protein localises to the cell membrane. Functionally, may mediate the Na(+)-independent transport of organic anions. The protein is Solute carrier organic anion transporter family member 1A6 (Slco1a6) of Rattus norvegicus (Rat).